The sequence spans 152 residues: MSGTVTMHSVFVYGSLMADDVVRLLLNRIPQTASATLPDFHRFSIKGRVYPAIIPAKSDKVSGKVLFGITDDELNVLDEFEDVEYERENVQVLLTDSSDEKLQTKTYVWAKKDDPDLYGTWDFEEWKQLHMEGFLKMTKEFAEELNLPKSEI.

Substrate is bound at residue 13–18; it reads YGSLMA. The active-site Proton acceptor is glutamate 81.

It belongs to the gamma-glutamylcyclotransferase family. Expressed mainly in leaves.

Its function is as follows. Putative gamma-glutamylcyclotransferase. This Arabidopsis thaliana (Mouse-ear cress) protein is AIG2-like protein D.